Consider the following 744-residue polypeptide: Palmitoyltransferase ZDHHC5-A (744 aa).

Positions 1–11 are enriched in gly residues; sequence MPSGSMSGGVS. Residues 1 to 25 are disordered; sequence MPSGSMSGGVSGPTSPPHPTVPSRP. The Cytoplasmic segment spans residues 1–30; that stretch reads MPSGSMSGGVSGPTSPPHPTVPSRPLRPSR. A helical membrane pass occupies residues 31–51; that stretch reads YVPVSAATAFLVGSTTLFFCF. Residues 52–61 lie on the Extracellular side of the membrane; sequence TCPWLSEQFS. A helical transmembrane segment spans residues 62 to 82; it reads VAVPIYNGVMFMFVLANFCMA. The Cytoplasmic segment spans residues 83-167; that stretch reads TFMDPGIFPR…IGRRNYRYFF (85 aa). The region spanning 121–171 is the DHHC domain; that stretch reads KWCSTCRFYRPPRCSHCSVCDNCVEDFDHHCPWVNNCIGRRNYRYFFLFLL. The active-site S-palmitoyl cysteine intermediate is the cysteine 151. The helical transmembrane segment at 168–188 threads the bilayer; that stretch reads LFLLSLTAHIMGVFGFGLLFI. Topologically, residues 189 to 208 are extracellular; that stretch reads LYHTQQLDRVHSAVTMAVMC. The chain crosses the membrane as a helical span at residues 209–229; the sequence is VAGLFFIPVAGLTGFHVVLVA. The Cytoplasmic portion of the chain corresponds to 230–744; it reads RGRTTNEQVT…VGGTTYEISV (515 aa). 3 disordered regions span residues 314–523, 556–645, and 664–744; these read SLEM…PVVG, QHAV…SLSY, and SVAG…EISV. Over residues 369-393 the composition is skewed to polar residues; it reads TYSSPGKNHTALTHAYANQSSQQPG. Residues 398–413 show a composition bias toward basic and acidic residues; that stretch reads PSLDGREGGGAERSGA. A compositionally biased stretch (gly residues) spans 415-428; that stretch reads RTGGGPGGPPGSGI. Residues 460–501 show a composition bias toward polar residues; the sequence is THNAPPSEATTSTSYKSLANQTPPQAARNGSLSYDSLLTPSE. Residues 571 to 584 show a composition bias toward basic and acidic residues; that stretch reads PERERERLLHDSQA. Residues 585–601 are compositionally biased toward basic residues; that stretch reads QHHHHHHHHHHHHRPPR. Low complexity-rich tracts occupy residues 621–630 and 689–723; these read RTRSTDTTHP and PKPSSTPSSPTHPISVSTRPGQAHSSAGSSQSPAH. A compositionally biased stretch (gly residues) spans 725–737; sequence PGGGVKKVTGVGG.

The protein belongs to the DHHC palmitoyltransferase family. ERF2/ZDHHC9 subfamily.

It is found in the cell membrane. It carries out the reaction L-cysteinyl-[protein] + hexadecanoyl-CoA = S-hexadecanoyl-L-cysteinyl-[protein] + CoA. In terms of biological role, palmitoyltransferase that catalyzes the addition of palmitate onto various protein substrates and is involved in a variety of cellular processes. The polypeptide is Palmitoyltransferase ZDHHC5-A (Danio rerio (Zebrafish)).